The chain runs to 88 residues: Large ribosomal subunit protein bL31B (88 aa).

This sequence belongs to the bacterial ribosomal protein bL31 family. Type B subfamily. As to quaternary structure, part of the 50S ribosomal subunit.

This Pasteurella multocida (strain Pm70) protein is Large ribosomal subunit protein bL31B.